Here is a 369-residue protein sequence, read N- to C-terminus: Phospho-N-acetylmuramoyl-pentapeptide-transferase (369 aa).

The next 10 helical transmembrane spans lie at 2–22 (IALL…TPLF), 55–75 (TVVV…MFLM), 86–106 (ALIL…DDFI), 120–140 (AKLI…LNFP), 163–183 (LAFG…NLIV), 196–216 (LDGL…LMGI), 239–259 (PLDL…FLWW), 266–286 (IFMG…FAIL), 291–311 (LLLG…IIQV), and 348–368 (ILGG…WVVL).

Belongs to the glycosyltransferase 4 family. MraY subfamily. Mg(2+) serves as cofactor.

The protein localises to the cell membrane. The catalysed reaction is UDP-N-acetyl-alpha-D-muramoyl-L-alanyl-gamma-D-glutamyl-meso-2,6-diaminopimeloyl-D-alanyl-D-alanine + di-trans,octa-cis-undecaprenyl phosphate = di-trans,octa-cis-undecaprenyl diphospho-N-acetyl-alpha-D-muramoyl-L-alanyl-D-glutamyl-meso-2,6-diaminopimeloyl-D-alanyl-D-alanine + UMP. The protein operates within cell wall biogenesis; peptidoglycan biosynthesis. In terms of biological role, catalyzes the initial step of the lipid cycle reactions in the biosynthesis of the cell wall peptidoglycan: transfers peptidoglycan precursor phospho-MurNAc-pentapeptide from UDP-MurNAc-pentapeptide onto the lipid carrier undecaprenyl phosphate, yielding undecaprenyl-pyrophosphoryl-MurNAc-pentapeptide, known as lipid I. This Pseudarthrobacter chlorophenolicus (strain ATCC 700700 / DSM 12829 / CIP 107037 / JCM 12360 / KCTC 9906 / NCIMB 13794 / A6) (Arthrobacter chlorophenolicus) protein is Phospho-N-acetylmuramoyl-pentapeptide-transferase.